The primary structure comprises 382 residues: Galactokinase (382 aa).

34–37 lines the substrate pocket; it reads EHTD. 124–130 serves as a coordination point for ATP; it reads GAGLSSS. Mg(2+)-binding residues include S130 and E162. The Proton acceptor role is filled by D174. Y223 is a binding site for substrate.

The protein belongs to the GHMP kinase family. GalK subfamily.

It localises to the cytoplasm. It carries out the reaction alpha-D-galactose + ATP = alpha-D-galactose 1-phosphate + ADP + H(+). The protein operates within carbohydrate metabolism; galactose metabolism. Catalyzes the transfer of the gamma-phosphate of ATP to D-galactose to form alpha-D-galactose-1-phosphate (Gal-1-P). The sequence is that of Galactokinase from Escherichia coli O1:K1 / APEC.